Reading from the N-terminus, the 172-residue chain is Large ribosomal subunit protein uL10 (172 aa).

This sequence belongs to the universal ribosomal protein uL10 family. In terms of assembly, part of the ribosomal stalk of the 50S ribosomal subunit. The N-terminus interacts with L11 and the large rRNA to form the base of the stalk. The C-terminus forms an elongated spine to which L12 dimers bind in a sequential fashion forming a multimeric L10(L12)X complex.

In terms of biological role, forms part of the ribosomal stalk, playing a central role in the interaction of the ribosome with GTP-bound translation factors. The sequence is that of Large ribosomal subunit protein uL10 from Rhizobium etli (strain CIAT 652).